The sequence spans 785 residues: Leucyl aminopeptidase (785 aa).

Substrate-binding positions include Glu106 and 238–242; that span reads GAMEN. Residue His273 participates in Zn(2+) binding. Glu274 (proton acceptor) is an active-site residue. His277 and Glu296 together coordinate Zn(2+).

The protein belongs to the peptidase M1 family. In terms of assembly, co-immunoprecipitates with the 60 kDa chaperonin. Zn(2+) is required as a cofactor. Post-translationally, can be phosphorylated by cell extracts.

Its subcellular location is the cytoplasm. It carries out the reaction Release of an N-terminal amino acid, Xaa-|-Yaa-, in which Xaa is preferably Leu, but may be other amino acids including Pro although not Arg or Lys, and Yaa may be Pro. Amino acid amides and methyl esters are also readily hydrolyzed, but rates on arylamides are exceedingly low.. Its function is as follows. Preferentially acts as a leucyl-aminopeptidase, although it also has activity against other substrates. This chain is Leucyl aminopeptidase (ape2), found in Saccharolobus solfataricus (strain ATCC 35092 / DSM 1617 / JCM 11322 / P2) (Sulfolobus solfataricus).